Reading from the N-terminus, the 84-residue chain is Cysteine-rich protamine (84 aa).

2 cysteine pairs are disulfide-bonded: Cys16–Cys24 and Cys64–Cys80.

Cross-linked by interchain disulfide bonds around the DNA-helix. As to expression, testis.

Its subcellular location is the nucleus. The protein localises to the chromosome. In terms of biological role, protamines substitute for histones in the chromatin of sperm during the haploid phase of spermatogenesis. They compact sperm DNA into a highly condensed, stable and inactive complex. This protamine condenses spermiogenic chromatin in a pattern which comprises fibers with a progressively larger diameter and lamellae that finally undergo definitive coalescence. The protein is Cysteine-rich protamine of Eledone cirrhosa (Curled octopus).